The sequence spans 381 residues: Cobalt-precorrin-5B C(1)-methyltransferase (381 aa).

It belongs to the CbiD family.

The catalysed reaction is Co-precorrin-5B + S-adenosyl-L-methionine = Co-precorrin-6A + S-adenosyl-L-homocysteine. The protein operates within cofactor biosynthesis; adenosylcobalamin biosynthesis; cob(II)yrinate a,c-diamide from sirohydrochlorin (anaerobic route): step 6/10. Functionally, catalyzes the methylation of C-1 in cobalt-precorrin-5B to form cobalt-precorrin-6A. In Prochlorococcus marinus (strain NATL1A), this protein is Cobalt-precorrin-5B C(1)-methyltransferase.